The following is a 1151-amino-acid chain: SCF E3 ubiquitin ligase complex F-box protein GRR1 (1151 aa).

The segment covering 1–18 (MDQDNNNHNDSNRLHPPD) has biased composition (basic and acidic residues). Residues 1-72 (MDQDNNNHND…ATSERNASEV (72 aa)) form a disordered region. The segment covering 38–49 (NNNNNNNNNNNN) has biased composition (low complexity). The segment covering 58–72 (RTRETATSERNASEV) has biased composition (basic and acidic residues). 2 positions are modified to phosphoserine: Ser-199 and Ser-300. The region spanning 314-361 (VFALNMLPSEILHLILDKLNQKYDIVKFLTVSKLWAEIIVKILYYRPH) is the F-box domain. 13 LRR repeats span residues 399-423 (GDYM…TLVF), 424-449 (CKHI…DITG), 450-475 (IRDV…YVPQ), 476-501 (ARNV…KITA), 502-527 (NNNM…DITL), 528-553 (SPNV…RITH), 554-582 (NTNI…DLSG), 583-608 (CENI…FLGK), 609-634 (CSRI…HFGH), 635-660 (CFNI…DFAC), 661-685 (CTNL…GLVK), 686-714 (CTQM…HLSY), and 715-740 (CSNL…SLTA). Residues 1066-1080 (AGANDTSNNETNNGN) are compositionally biased toward low complexity. Disordered regions lie at residues 1066-1090 (AGAN…NPNF) and 1118-1151 (VRNN…EDML).

In terms of assembly, interacts with SKP1. Component of the probable SCF(GRR1) complex containing CDC53, SKP1, RBX1 and GRR1.

Its subcellular location is the membrane. It participates in protein modification; protein ubiquitination. Substrate recognition component of a SCF (SKP1-CUL1-F-box protein) E3 ubiquitin-protein ligase complex which mediates the ubiquitination and subsequent proteasomal degradation of target proteins. Recognizes and directs ubiquitination of phosphorylated CLN1, CLN2 and GIC2. Probably constitutes the primary response element required for the generation or interpretation of the signal that induces glucose repression. The sequence is that of SCF E3 ubiquitin ligase complex F-box protein GRR1 (GRR1) from Saccharomyces cerevisiae (strain ATCC 204508 / S288c) (Baker's yeast).